A 338-amino-acid polypeptide reads, in one-letter code: Rho GTPase-activating protein gacA (338 aa).

The 179-residue stretch at 149-327 (NTLEHVEDEG…NVLSHKVAVH (179 aa)) folds into the Rho-GAP domain.

The protein localises to the cytoplasm. Functionally, rho GTPase-activating protein involved in the signal transduction pathway. The chain is Rho GTPase-activating protein gacA (gacA) from Dictyostelium discoideum (Social amoeba).